The sequence spans 246 residues: UDP-N-acetyl-D-mannosaminuronic acid transferase (246 aa).

It belongs to the glycosyltransferase 26 family.

The catalysed reaction is UDP-N-acetyl-alpha-D-mannosaminouronate + N-acetyl-alpha-D-glucosaminyl-di-trans,octa-cis-undecaprenyl diphosphate = beta-D-ManNAcA-(1-&gt;4)-alpha-D-GlcNAc-di-trans,octa-cis-undecaprenyl diphosphate + UDP + H(+). The protein operates within bacterial outer membrane biogenesis; enterobacterial common antigen biosynthesis. In terms of biological role, catalyzes the synthesis of Und-PP-GlcNAc-ManNAcA (Lipid II), the second lipid-linked intermediate involved in enterobacterial common antigen (ECA) synthesis. The sequence is that of UDP-N-acetyl-D-mannosaminuronic acid transferase from Serratia proteamaculans (strain 568).